A 936-amino-acid chain; its full sequence is Myocardin-related transcription factor A (936 aa).

3 RPEL repeats span residues 15 to 40 (TVLQLKLQQRRTREELENQGIMPPLK), 59 to 84 (DYLKRKIRSRPERAELVRMHILEETS), and 103 to 128 (DDLNEKISQRPGPMELVVKNILPVET). A Bipartite Nuclear localization signal motif is present at residues 62–100 (KRKIRSRPERAELVRMHILEETSAEPSLQAKQIKLKRAR). 3 disordered regions span residues 146–185 (SSFDEDSSDALSPEQPASQESQGSIPSPIENRPSETTQIP), 234–258 (SQPKPSFEKSQRIKKPKEPKPKVKK), and 401–422 (SQDPSTATAASAKPTPVQQAKP). Residues 160 to 170 (QPASQESQGSI) show a composition bias toward polar residues. Residues 239-254 (SFEKSQRIKKPKEPKP) are compositionally biased toward basic and acidic residues. The 35-residue stretch at 368–402 (LDEMKVAELKLELKHRGLPVSGTKIDLIERLKASQ) folds into the SAP domain. Residues 404-416 (PSTATAASAKPTP) are compositionally biased toward low complexity. Residues 497 to 542 (DARDKDLMLREKDRQIEELTQRLKQKQELVERLRQQLEQEKRTPQH) adopt a coiled-coil conformation. Positions 707 to 755 (HNESPATPPQQPEPEPPPHSIFLTHSSPQWSKNPPGYDEAMKQQPNSCE) are disordered. The segment covering 712–725 (ATPPQQPEPEPPPH) has biased composition (pro residues). A compositionally biased stretch (polar residues) spans 729-738 (LTHSSPQWSK).

In terms of assembly, interacts with srf, forming the srf-mrtfa nuclear complex which binds the 5'-CArG-3' consensus motif (CArG box) on DNA via srf. Interacts (via RPEL repeats) with globular actin (G-actin), thereby regulating its subcellular location and activity of the complex formed with srf.

It is found in the cytoplasm. It localises to the nucleus. Its function is as follows. Transcription coactivator that associates with the serum response factor (srf) transcription factor to control expression of genes regulating the cytoskeleton during development, morphogenesis and cell migration. The srf-mrtfa complex activity responds to Rho GTPase-induced changes in cellular globular actin (G-actin) concentration, thereby coupling cytoskeletal gene expression to cytoskeletal dynamics. Mrtfa binds G-actin via its RPEL repeats, regulating activity of the mrtfa-srf complex. Activity is also regulated by filamentous actin (F-actin) in the nucleus. The polypeptide is Myocardin-related transcription factor A (mrtfa) (Xenopus laevis (African clawed frog)).